Consider the following 297-residue polypeptide: N-acetylmuramic acid 6-phosphate etherase (297 aa).

Positions 55–218 (AAAALKSGGR…STGAMVKFGK (164 aa)) constitute an SIS domain. The active-site Proton donor is the Glu83. Glu114 is a catalytic residue.

Belongs to the GCKR-like family. MurNAc-6-P etherase subfamily. In terms of assembly, homodimer.

The catalysed reaction is N-acetyl-D-muramate 6-phosphate + H2O = N-acetyl-D-glucosamine 6-phosphate + (R)-lactate. The protein operates within amino-sugar metabolism; 1,6-anhydro-N-acetylmuramate degradation. It participates in amino-sugar metabolism; N-acetylmuramate degradation. Its pathway is cell wall biogenesis; peptidoglycan recycling. In terms of biological role, specifically catalyzes the cleavage of the D-lactyl ether substituent of MurNAc 6-phosphate, producing GlcNAc 6-phosphate and D-lactate. Together with AnmK, is also required for the utilization of anhydro-N-acetylmuramic acid (anhMurNAc) either imported from the medium or derived from its own cell wall murein, and thus plays a role in cell wall recycling. The polypeptide is N-acetylmuramic acid 6-phosphate etherase (Salmonella typhi).